A 274-amino-acid polypeptide reads, in one-letter code: Probable ribosomal RNA small subunit methyltransferase A (274 aa).

Positions 22, 24, 50, 71, 99, and 114 each coordinate S-adenosyl-L-methionine.

This sequence belongs to the class I-like SAM-binding methyltransferase superfamily. rRNA adenine N(6)-methyltransferase family. RsmA subfamily.

The protein resides in the cytoplasm. Its function is as follows. Specifically dimethylates two adjacent adenosines in the loop of a conserved hairpin near the 3'-end of 16S rRNA in the 30S particle. May play a critical role in biogenesis of 30S subunits. This is Probable ribosomal RNA small subunit methyltransferase A from Natronomonas pharaonis (strain ATCC 35678 / DSM 2160 / CIP 103997 / JCM 8858 / NBRC 14720 / NCIMB 2260 / Gabara) (Halobacterium pharaonis).